We begin with the raw amino-acid sequence, 67 residues long: Major cold shock protein (67 aa).

One can recognise a CSD domain in the interval 4-63; sequence GTVKWFNAEKGFGFISTENGQDVFAHFSAIQTSGFKTLEEGQKVAFDVEEGQRGPQAVNI.

In terms of assembly, homodimer.

Its subcellular location is the cytoplasm. The polypeptide is Major cold shock protein (cspA) (Streptococcus pyogenes serotype M6 (strain ATCC BAA-946 / MGAS10394)).